Consider the following 256-residue polypeptide: Peptidyl-prolyl cis-trans isomerase FKBP19, chloroplastic (256 aa).

A chloroplast-targeting transit peptide spans 1–29; the sequence is MASISSFGCFPQSTALAGTSSTTRCRTTV. The N-terminal 59 residues, 30 to 88, are a transit peptide targeting the thylakoid; it reads AARLADQSDDFAPLRSSGGNCGCVNNSGEFDRRKLLVSSVGLLIGALSYDSKDGDFASA. Residues 135–254 form the PPIase FKBP-type domain; it reads GDKVVVDWDG…LFDVELLKIV (120 aa). S164 is modified (phosphoserine).

It belongs to the FKBP-type PPIase family.

The protein localises to the plastid. Its subcellular location is the chloroplast thylakoid lumen. It catalyses the reaction [protein]-peptidylproline (omega=180) = [protein]-peptidylproline (omega=0). PPIases accelerate the folding of proteins. It catalyzes the cis-trans isomerization of proline imidic peptide bonds in oligopeptides. The chain is Peptidyl-prolyl cis-trans isomerase FKBP19, chloroplastic (FKBP19) from Arabidopsis thaliana (Mouse-ear cress).